The primary structure comprises 543 residues: Cytochrome P450 monooxygenase CYP1 (543 aa).

A helical transmembrane segment spans residues 40 to 60 (SSFFTRILIAFIGLCLLSIFS). N-linked (GlcNAc...) asparagine glycosylation is found at Asn210 and Asn367. Cys478 provides a ligand contact to heme. An N-linked (GlcNAc...) asparagine glycan is attached at Asn517.

The protein belongs to the cytochrome P450 family. Heme serves as cofactor.

The protein localises to the membrane. It participates in secondary metabolite biosynthesis. Cytochrome P450 monooxygenase; part of the gene cluster that mediates the biosynthesis of a tyrosine-derived cytochalasan acting as a fungal signal recognized by resistant rice plants and leads to avirulence in Pi33 resistant rice cultivars. The first step in the pathway is catalyzed by the hybrid PKS-NRPS ACE1, assisted by the enoyl reductase RAP1, that are responsible for fusion of the tyrosine precursor and the polyketide backbone. The polyketide synthase module (PKS) of ACE1 is responsible for the synthesis of the polyketide backbone and the downstream nonribosomal peptide synthetase (NRPS) amidates the carboxyl end of the polyketide with the tyrosine precursor. Because ACE1 lacks a designated enoylreductase (ER) domain, the required activity is provided the enoyl reductase RAP1. Reduction by the hydrolyase ORFZ, followed by dehydration and intra-molecular Diels-Alder cyclization by the Diels-Alderase ORF3 then yield the required isoindolone-fused macrocycle. A number of oxidative steps catalyzed by the tailoring enzymes identified within the cluster, including cytochrome P450 monooxygenases CYP1 to CYP4, the FAD-linked oxidoreductase OXR2 and the short-chain dehydrogenase/reductase OXR1, are further required to afford the final cytochalasans that confer avirulence and which have still to be identified. The monooxygenase CYP1 has been shown to be a site-selective C-18 hydroxylase whereas the function of CYP3 is the site-selective epoxidation of the C-6/C-7 olefin that is present in some intermediate compounds. Finally, SYN2 and RAP2 are not required for avirulence in Pi33 resistant rice cultivars. In Pyricularia oryzae (strain 70-15 / ATCC MYA-4617 / FGSC 8958) (Rice blast fungus), this protein is Cytochrome P450 monooxygenase CYP1.